The chain runs to 499 residues: Multiphosphoryl transfer protein (499 aa).

Residues 2–142 (LELSESNIHL…AEFCAILMGE (141 aa)) enclose the PTS EIIA type-2 domain. Catalysis depends on histidine 62, which acts as the Tele-phosphohistidine intermediate; for EIIA activity. Histidine 62 bears the Phosphohistidine; by HPr mark. A m domain region spans residues 155–285 (SLDVNTQSLL…SDVETQSVEG (131 aa)). Residues 286 to 376 (AVVGTFTIRN…KAIANGLGEN (91 aa)) form the HPr 1 domain. Histidine 300 functions as the Pros-phosphohistidine intermediate; for HPr 1 activity in the catalytic mechanism. Histidine 300 is modified (phosphohistidine). Residues 378–409 (SAVPPSEPDTIEIMGDQIHTPAVTEDDNLPAN) are linker. The HPr 2 domain maps to 410 to 499 (AIEAVFVIKN…GAVIESGLGE (90 aa)). Histidine 424 bears the Phosphohistidine mark. Histidine 424 functions as the Pros-phosphohistidine intermediate; for HPr 2 activity in the catalytic mechanism.

Its subcellular location is the cytoplasm. In terms of biological role, the phosphoenolpyruvate-dependent sugar phosphotransferase system (sugar PTS), a major carbohydrate active transport system, catalyzes the phosphorylation of incoming sugar substrates concomitantly with their translocation across the cell membrane. The enzyme II FruAB PTS system is involved in fructose transport. The protein is Multiphosphoryl transfer protein (fruB) of Haemophilus influenzae (strain ATCC 51907 / DSM 11121 / KW20 / Rd).